The chain runs to 167 residues: Phospholipase A and acyltransferase 1 (167 aa).

Residues 1-138 (MAVNDCFSLT…GEGVSEQANR (138 aa)) are Cytoplasmic-facing. An LRAT domain is found at 20–135 (LIEVFRPCYQ…LRYGEGVSEQ (116 aa)). His30 is a catalytic residue. Cys119 (acyl-thioester intermediate) is an active-site residue. The chain crosses the membrane as a helical span at residues 139 to 159 (AIGTIGLVAAGIDIFTFLGLF). Residues 160–167 (PKRQGAKS) are Lumenal-facing.

The protein belongs to the H-rev107 family.

It is found in the membrane. Its subcellular location is the cytoplasm. It localises to the nucleus. The enzyme catalyses a 1,2-diacyl-sn-glycero-3-phosphocholine + H2O = a 1-acyl-sn-glycero-3-phosphocholine + a fatty acid + H(+). The catalysed reaction is a 1,2-diacyl-sn-glycero-3-phosphocholine + H2O = a 2-acyl-sn-glycero-3-phosphocholine + a fatty acid + H(+). It carries out the reaction 1,2-dihexadecanoyl-sn-glycero-3-phosphocholine + H2O = 2-hexadecanoyl-sn-glycero-3-phosphocholine + hexadecanoate + H(+). It catalyses the reaction 1,2-dihexadecanoyl-sn-glycero-3-phosphocholine + H2O = 1-hexadecanoyl-sn-glycero-3-phosphocholine + hexadecanoate + H(+). The enzyme catalyses 1-hexadecanoyl-2-(5Z,8Z,11Z,14Z-eicosatetraenoyl)-sn-glycero-3-phosphoethanolamine + H2O = 2-(5Z,8Z,11Z,14Z)-eicosatetraenoyl-sn-glycero-3-phosphoethanolamine + hexadecanoate + H(+). The catalysed reaction is 1-hexadecanoyl-2-(5Z,8Z,11Z,14Z-eicosatetraenoyl)-sn-glycero-3-phosphoethanolamine + H2O = 1-hexadecanoyl-sn-glycero-3-phosphoethanolamine + (5Z,8Z,11Z,14Z)-eicosatetraenoate + H(+). It carries out the reaction 1,2-di-(9Z-octadecenoyl)-sn-glycero-3-phosphoethanolamine + 1,2-dihexadecanoyl-sn-glycero-3-phosphocholine = hexadecanoyl-sn-glycero-3-phosphocholine + N-hexadecanoyl-1,2-di-(9Z-octadecenoyl)-sn-glycero-3-phosphoethanolamine + H(+). It catalyses the reaction 1,2-dihexadecanoyl-sn-glycero-3-phosphocholine + a 2-acyl-sn-glycero-3-phosphocholine = a 1-hexadecanoyl-2-acyl-sn-glycero-3-phosphocholine + 2-hexadecanoyl-sn-glycero-3-phosphocholine. Exhibits both phospholipase A1/2 and acyltransferase activities. Shows phospholipase A1 (PLA1) and A2 (PLA2) activity, catalyzing the calcium-independent release of fatty acids from the sn-1 or sn-2 position of glycerophospholipids. Shows O-acyltransferase activity, catalyzing the transfer of a fatty acyl group from glycerophospholipid to the hydroxyl group of lysophospholipid. This is Phospholipase A and acyltransferase 1 from Rattus norvegicus (Rat).